The following is a 286-amino-acid chain: Alpha-ketoglutarate-dependent dioxygenase alkB homolog 3 (286 aa).

A disordered region spans residues 1–46 (MEDKRQRARVQGGWATPTKSQSATQPASPARSRLSQTAGPAWRSKE). A compositionally biased stretch (polar residues) spans 17–38 (PTKSQSATQPASPARSRLSQTA). Substrate is bound by residues Trp-115 and 141–143 (YTY). In terms of domain architecture, Fe2OG dioxygenase spans 172-278 (TFNSLLCNFY…RVNLTFRTVY (107 aa)). Position 177 is a (4R)-5-hydroxyleucine; alternate (Leu-177). Leu-177 is subject to (4R)-5-oxoleucine; alternate. 179–181 (NFY) serves as a coordination point for 2-oxoglutarate. Residues His-191 and Asp-193 each coordinate Fe cation. Asp-194 contacts substrate. His-257 is a Fe cation binding site. 2-oxoglutarate-binding positions include 269–275 (RVNLTFR) and Arg-275.

Belongs to the alkB family. Interacts with the ASCC complex composed of ASCC1, ASCC2 and ASCC3. Interacts directly with ASCC3, and is thereby recruited to the ASCC complex. Interacts with OTUD4; the interaction is direct. Interacts with USP7 and USP9X. Fe(2+) is required as a cofactor. Post-translationally, ubiquitinated; undergoes 'Lys-48'-linked polyubiquitination. OTUD4 promotes USP7 and USP9X-dependent deubiquitination of 'Lys-48'-polyubiquitinated ALKBH3 promoting the repair of alkylated DNA lesions. In terms of tissue distribution, detected in testis, kidney, liver and heart.

It localises to the nucleus. It is found in the cytoplasm. The enzyme catalyses an N(1)-methyladenosine in mRNA + 2-oxoglutarate + O2 = an adenosine in mRNA + formaldehyde + succinate + CO2. It carries out the reaction a methylated nucleobase within DNA + 2-oxoglutarate + O2 = a nucleobase within DNA + formaldehyde + succinate + CO2. The catalysed reaction is an N(1)-methyl-2'-deoxyadenosine in single-stranded DNA + 2-oxoglutarate + O2 = a 2'-deoxyadenosine in single-stranded DNA + formaldehyde + succinate + CO2 + H(+). It catalyses the reaction an N(3)-methyl-2'-deoxycytidine in single-stranded DNA + 2-oxoglutarate + O2 = a 2'-deoxycytidine in single-stranded DNA + formaldehyde + succinate + CO2 + H(+). The enzyme catalyses a 3,N(4)-etheno-2'-deoxycytidine in single-stranded DNA + 2-oxoglutarate + O2 + H2O = a 2'-deoxycytidine in single-stranded DNA + glyoxal + succinate + CO2. With respect to regulation, activated by ascorbate. Dioxygenase that mediates demethylation of DNA and RNA containing 1-methyladenosine (m1A). Repairs alkylated DNA containing 1-methyladenosine (m1A) and 3-methylcytosine (m3C) by oxidative demethylation. Has a strong preference for single-stranded DNA. Able to process alkylated m3C within double-stranded regions via its interaction with ASCC3, which promotes DNA unwinding to generate single-stranded substrate needed for ALKBH3. Can repair exocyclic 3,N4-ethenocytosine adducs in single-stranded DNA. Also acts on RNA. Demethylates N(1)-methyladenosine (m1A) RNA, an epigenetic internal modification of messenger RNAs (mRNAs) highly enriched within 5'-untranslated regions (UTRs) and in the vicinity of start codons. Requires molecular oxygen, alpha-ketoglutarate and iron. This chain is Alpha-ketoglutarate-dependent dioxygenase alkB homolog 3, found in Mus musculus (Mouse).